We begin with the raw amino-acid sequence, 590 residues long: Aspartate--tRNA ligase (590 aa).

L-aspartate is bound at residue Glu172. The segment at 196 to 199 (QLFK) is aspartate. Arg218 provides a ligand contact to L-aspartate. Residues 218-220 (RDE) and Gln227 each bind ATP. His449 provides a ligand contact to L-aspartate. Glu483 contacts ATP. Arg490 contacts L-aspartate. Residue 535–538 (GLDR) coordinates ATP.

This sequence belongs to the class-II aminoacyl-tRNA synthetase family. Type 1 subfamily. Homodimer.

Its subcellular location is the cytoplasm. The enzyme catalyses tRNA(Asp) + L-aspartate + ATP = L-aspartyl-tRNA(Asp) + AMP + diphosphate. Catalyzes the attachment of L-aspartate to tRNA(Asp) in a two-step reaction: L-aspartate is first activated by ATP to form Asp-AMP and then transferred to the acceptor end of tRNA(Asp). The sequence is that of Aspartate--tRNA ligase from Glaesserella parasuis serovar 5 (strain SH0165) (Haemophilus parasuis).